The following is a 664-amino-acid chain: Chaperone protein DnaK (664 aa).

Residue T201 is modified to Phosphothreonine; by autocatalysis. Disordered regions lie at residues 516-538 (DAEK…NEAD) and 578-664 (APVE…KPND). The segment covering 578–592 (APVEKIKDASEELSR) has biased composition (basic and acidic residues). Composition is skewed to low complexity over residues 600–617 (AMQS…ANAQ) and 638–649 (AGNSASSNSNNE).

It belongs to the heat shock protein 70 family.

Functionally, acts as a chaperone. The chain is Chaperone protein DnaK from Chlamydia caviae (strain ATCC VR-813 / DSM 19441 / 03DC25 / GPIC) (Chlamydophila caviae).